The primary structure comprises 658 residues: Carnitine O-palmitoyltransferase 2, mitochondrial (658 aa).

A mitochondrion-targeting transit peptide spans 1–25 (MMPRLLLRDWPRCPSLVLGAPSRPL). Residues 26-178 (SAVSGPAEYL…GLLEPEVFHL (153 aa)) are Mitochondrial matrix-facing. An N6-succinyllysine modification is found at Lys69. Lys79 is subject to N6-acetyllysine. Lys85 carries the N6-succinyllysine modification. The segment at residues 179-208 (NPARSDTDAFKRLIRFVPSSLSWYGAYLVN) is an intramembrane region (note=Mitochondrial inner membrane). The Mitochondrial matrix segment spans residues 209–658 (AYPLDMSQYF…DALEGKAIKT (450 aa)). Position 239 is an N6-acetyllysine; alternate (Lys239). An N6-succinyllysine; alternate modification is found at Lys239. Position 305 is an N6-acetyllysine (Lys305). His372 serves as the catalytic Proton acceptor. Lys418 carries the N6-acetyllysine; alternate modification. Residue Lys418 is modified to N6-succinyllysine; alternate. N6-succinyllysine is present on residues Lys424 and Lys439. A CoA-binding site is contributed by 452 to 464 (GKEFLKKKKLSPD). (R)-carnitine is bound by residues Tyr486, Ser488, and Thr499. N6-acetyllysine; alternate occurs at positions 510 and 544. N6-succinyllysine; alternate is present on residues Lys510 and Lys544.

The protein belongs to the carnitine/choline acetyltransferase family.

Its subcellular location is the mitochondrion inner membrane. The catalysed reaction is (R)-carnitine + hexadecanoyl-CoA = O-hexadecanoyl-(R)-carnitine + CoA. It carries out the reaction octanoyl-CoA + (R)-carnitine = O-octanoyl-(R)-carnitine + CoA. It catalyses the reaction decanoyl-CoA + (R)-carnitine = O-decanoyl-(R)-carnitine + CoA. The enzyme catalyses dodecanoyl-CoA + (R)-carnitine = O-dodecanoyl-R-carnitine + CoA. The catalysed reaction is tetradecanoyl-CoA + (R)-carnitine = O-tetradecanoyl-(R)-carnitine + CoA. It carries out the reaction (R)-carnitine + octadecanoyl-CoA = O-octadecanoyl-(R)-carnitine + CoA. It catalyses the reaction eicosanoyl-CoA + (R)-carnitine = O-eicosanoyl-(R)-carnitine + CoA. The enzyme catalyses (9Z)-tetradecenoyl-CoA + (R)-carnitine = O-(9Z)-tetradecenoyl-(R)-carnitine + CoA. The catalysed reaction is (5Z)-tetradecenoyl-CoA + (R)-carnitine = O-(5Z)-tetradecenoyl-(R)-carnitine + CoA. It carries out the reaction (R)-carnitine + (9Z)-octadecenoyl-CoA = O-(9Z)-octadecenoyl-(R)-carnitine + CoA. It catalyses the reaction 4,8-dimethylnonanoyl-CoA + (R)-carnitine = O-4,8-dimethylnonanoyl-(R)-carnitine + CoA. It participates in lipid metabolism; fatty acid beta-oxidation. Functionally, involved in the intramitochondrial synthesis of acylcarnitines from accumulated acyl-CoA metabolites. Reconverts acylcarnitines back into the respective acyl-CoA esters that can then undergo beta-oxidation, an essential step for the mitochondrial uptake of long-chain fatty acids and their subsequent beta-oxidation in the mitochondrion. Active with medium (C8-C12) and long-chain (C14-C18) acyl-CoA esters. The polypeptide is Carnitine O-palmitoyltransferase 2, mitochondrial (Mus musculus (Mouse)).